Here is a 342-residue protein sequence, read N- to C-terminus: tRNA N6-adenosine threonylcarbamoyltransferase (342 aa).

Residues His114 and His118 each contribute to the Fe cation site. Substrate-binding positions include 136-140 (LVSGG), Asp169, Gly182, Asp186, and Asn275. Residue Asp301 participates in Fe cation binding.

It belongs to the KAE1 / TsaD family. Fe(2+) is required as a cofactor.

The protein localises to the cytoplasm. It carries out the reaction L-threonylcarbamoyladenylate + adenosine(37) in tRNA = N(6)-L-threonylcarbamoyladenosine(37) in tRNA + AMP + H(+). Functionally, required for the formation of a threonylcarbamoyl group on adenosine at position 37 (t(6)A37) in tRNAs that read codons beginning with adenine. Is involved in the transfer of the threonylcarbamoyl moiety of threonylcarbamoyl-AMP (TC-AMP) to the N6 group of A37, together with TsaE and TsaB. TsaD likely plays a direct catalytic role in this reaction. This chain is tRNA N6-adenosine threonylcarbamoyltransferase, found in Streptococcus pyogenes serotype M2 (strain MGAS10270).